Here is a 495-residue protein sequence, read N- to C-terminus: Transcription termination/antitermination protein NusA (495 aa).

Residues 135-200 (GKIVTGTVKK…KTAQLFVTRS (66 aa)) form the S1 motif domain. Residues 302-374 (NHSMDIAVEA…LDEEFAQILV (73 aa)) form the KH domain.

The protein belongs to the NusA family. As to quaternary structure, monomer. Binds directly to the core enzyme of the DNA-dependent RNA polymerase and to nascent RNA.

Its subcellular location is the cytoplasm. Participates in both transcription termination and antitermination. The polypeptide is Transcription termination/antitermination protein NusA (Haemophilus influenzae (strain ATCC 51907 / DSM 11121 / KW20 / Rd)).